Here is a 132-residue protein sequence, read N- to C-terminus: Small ribosomal subunit protein uS8 (132 aa).

Belongs to the universal ribosomal protein uS8 family. Part of the 30S ribosomal subunit. Contacts proteins S5 and S12.

One of the primary rRNA binding proteins, it binds directly to 16S rRNA central domain where it helps coordinate assembly of the platform of the 30S subunit. This Lactococcus lactis subsp. lactis (strain IL1403) (Streptococcus lactis) protein is Small ribosomal subunit protein uS8.